The chain runs to 338 residues: Lipoate-protein ligase A (338 aa).

A BPL/LPL catalytic domain is found at 29 to 216 (PATQRVLFLW…AFFAHYGERV (188 aa)). ATP-binding positions include Arg71, 76-79 (GAVF), and Lys134. Lys134 contributes to the (R)-lipoate binding site.

Belongs to the LplA family. In terms of assembly, monomer.

It localises to the cytoplasm. The enzyme catalyses L-lysyl-[lipoyl-carrier protein] + (R)-lipoate + ATP = N(6)-[(R)-lipoyl]-L-lysyl-[lipoyl-carrier protein] + AMP + diphosphate + H(+). It participates in protein modification; protein lipoylation via exogenous pathway; protein N(6)-(lipoyl)lysine from lipoate: step 1/2. The protein operates within protein modification; protein lipoylation via exogenous pathway; protein N(6)-(lipoyl)lysine from lipoate: step 2/2. Its function is as follows. Catalyzes both the ATP-dependent activation of exogenously supplied lipoate to lipoyl-AMP and the transfer of the activated lipoyl onto the lipoyl domains of lipoate-dependent enzymes. This is Lipoate-protein ligase A from Shigella boydii serotype 18 (strain CDC 3083-94 / BS512).